The sequence spans 212 residues: Peptide methionine sulfoxide reductase MsrA (212 aa).

Cys52 is an active-site residue.

Belongs to the MsrA Met sulfoxide reductase family.

The catalysed reaction is L-methionyl-[protein] + [thioredoxin]-disulfide + H2O = L-methionyl-(S)-S-oxide-[protein] + [thioredoxin]-dithiol. It carries out the reaction [thioredoxin]-disulfide + L-methionine + H2O = L-methionine (S)-S-oxide + [thioredoxin]-dithiol. In terms of biological role, has an important function as a repair enzyme for proteins that have been inactivated by oxidation. Catalyzes the reversible oxidation-reduction of methionine sulfoxide in proteins to methionine. This chain is Peptide methionine sulfoxide reductase MsrA, found in Salmonella arizonae (strain ATCC BAA-731 / CDC346-86 / RSK2980).